The sequence spans 136 residues: Protein NrdI (136 aa).

Belongs to the NrdI family.

In terms of biological role, probably involved in ribonucleotide reductase function. The sequence is that of Protein NrdI from Klebsiella pneumoniae subsp. pneumoniae (strain ATCC 700721 / MGH 78578).